Here is a 268-residue protein sequence, read N- to C-terminus: Bis(5'-nucleosyl)-tetraphosphatase, symmetrical (268 aa).

It belongs to the Ap4A hydrolase family.

The catalysed reaction is P(1),P(4)-bis(5'-adenosyl) tetraphosphate + H2O = 2 ADP + 2 H(+). Hydrolyzes diadenosine 5',5'''-P1,P4-tetraphosphate to yield ADP. The polypeptide is Bis(5'-nucleosyl)-tetraphosphatase, symmetrical (Nitrosomonas europaea (strain ATCC 19718 / CIP 103999 / KCTC 2705 / NBRC 14298)).